Consider the following 216-residue polypeptide: Histone doublet H4-H3 (216 aa).

Basic residues predominate over residues 1 to 12 (MSKAGKKVKAQQ). Residues 1 to 23 (MSKAGKKVKAQQHGHLADHVSVG) form a disordered region.

The protein localises to the host nucleus. Its subcellular location is the host cytoplasm. The protein resides in the virion. Its function is as follows. Histone-like protein that is recruited to viral factories during viral replication and participates in viral DNA packaging and virion production probably by forming unstable nucleosome-like particles. May compact the viral DNA. The polypeptide is Histone doublet H4-H3 (Melbournevirus (MelV)).